Consider the following 224-residue polypeptide: Stage II sporulation protein R (224 aa).

This Bacillus subtilis (strain 168) protein is Stage II sporulation protein R (spoIIR).